The primary structure comprises 545 residues: Chaperonin GroEL (545 aa).

Residues 29–32, K50, 86–90, G413, 479–481, and D496 each bind ATP; these read TLGP, DGTTT, and NAA. Residues 525-545 are disordered; the sequence is KPEKEKAPAAAGAPDMGGMDF. Low complexity predominate over residues 532–545; the sequence is PAAAGAPDMGGMDF.

This sequence belongs to the chaperonin (HSP60) family. As to quaternary structure, forms a cylinder of 14 subunits composed of two heptameric rings stacked back-to-back. Interacts with the co-chaperonin GroES.

It localises to the cytoplasm. It carries out the reaction ATP + H2O + a folded polypeptide = ADP + phosphate + an unfolded polypeptide.. Its function is as follows. Together with its co-chaperonin GroES, plays an essential role in assisting protein folding. The GroEL-GroES system forms a nano-cage that allows encapsulation of the non-native substrate proteins and provides a physical environment optimized to promote and accelerate protein folding. This is Chaperonin GroEL from Deinococcus geothermalis (strain DSM 11300 / CIP 105573 / AG-3a).